A 428-amino-acid chain; its full sequence is Glutamate--tRNA ligase 2 (428 aa).

The 'HIGH' region motif lies at 6–16 (PSPTGDMRTEQ).

The protein belongs to the class-I aminoacyl-tRNA synthetase family. Glutamate--tRNA ligase type 1 subfamily. In terms of assembly, monomer.

The protein resides in the cytoplasm. It carries out the reaction tRNA(Glu) + L-glutamate + ATP = L-glutamyl-tRNA(Glu) + AMP + diphosphate. In terms of biological role, catalyzes the attachment of glutamate to tRNA(Glu) in a two-step reaction: glutamate is first activated by ATP to form Glu-AMP and then transferred to the acceptor end of tRNA(Glu). This Sulfurovum sp. (strain NBC37-1) protein is Glutamate--tRNA ligase 2.